The primary structure comprises 245 residues: Protein-glutamine gamma-glutamyltransferase (245 aa).

This sequence belongs to the bacillus TGase family.

The enzyme catalyses L-glutaminyl-[protein] + L-lysyl-[protein] = [protein]-L-lysyl-N(6)-5-L-glutamyl-[protein] + NH4(+). Functionally, probably plays a role in the assembly of the spore coat proteins by catalyzing epsilon-(gamma-glutamyl)lysine cross-links. The sequence is that of Protein-glutamine gamma-glutamyltransferase from Bacillus licheniformis (strain ATCC 14580 / DSM 13 / JCM 2505 / CCUG 7422 / NBRC 12200 / NCIMB 9375 / NCTC 10341 / NRRL NRS-1264 / Gibson 46).